The chain runs to 34 residues: Photosystem I reaction center subunit XII (34 aa).

A helical membrane pass occupies residues 10–32; it reads IYIALVVAAHAAILALRLSVSLY.

This sequence belongs to the PsaM family.

Its subcellular location is the cellular thylakoid membrane. This is Photosystem I reaction center subunit XII from Synechococcus sp. (strain RCC307).